The following is a 451-amino-acid chain: MREIVHIQAGQCGNQIGAKFWEVISDEHGVDPTGAYHGDSDLQLERINVYYNEATGGRYVPRAILMDLEPGTMDSVRAGPYGQIFRPDNFVFGQTGAGNNWAKGHYTEGAELIDSVLDVVRKEAESCDCLQGFQIAHSLGGGTGSGMGTLLISKIREEYPDRMMMTFSVFPSPKVSDTVVEPYNATLSVHQLVENADEVMCIDNEALYDICFRTLKLTTPTFGDLNHLVSIVMSGVTCCLRFPGQLNSDLRKLAVNLIPFPRLHFFLIGFAPLTSRGSQQYRALTVPELTQQMFDAKNMMAASDPRHGRYLTASAMFRGRMSTKEVDEQMLNVQNKNSSYFVEWIPNNIKSSVCDIPPRGLKMAATFIGNSTAIQEMFKRVSEQFTAMFRRKAFLHWYTGEGMDEMEFTEAESNMNDLVSEYQQYQDATAEEEGEFDENEGAEGEEQPADY.

GTP-binding residues include Gln-11, Glu-69, Ser-138, Gly-142, Thr-143, Gly-144, Asn-204, and Asn-226. Glu-69 is a binding site for Mg(2+). The tract at residues 426 to 451 (QDATAEEEGEFDENEGAEGEEQPADY) is disordered. Positions 429–451 (TAEEEGEFDENEGAEGEEQPADY) are enriched in acidic residues.

The protein belongs to the tubulin family. As to quaternary structure, dimer of alpha and beta chains. A typical microtubule is a hollow water-filled tube with an outer diameter of 25 nm and an inner diameter of 15 nM. Alpha-beta heterodimers associate head-to-tail to form protofilaments running lengthwise along the microtubule wall with the beta-tubulin subunit facing the microtubule plus end conferring a structural polarity. Microtubules usually have 13 protofilaments but different protofilament numbers can be found in some organisms and specialized cells. Mg(2+) is required as a cofactor.

It is found in the cytoplasm. It localises to the cytoskeleton. Its function is as follows. Tubulin is the major constituent of microtubules, a cylinder consisting of laterally associated linear protofilaments composed of alpha- and beta-tubulin heterodimers. Microtubules grow by the addition of GTP-tubulin dimers to the microtubule end, where a stabilizing cap forms. Below the cap, tubulin dimers are in GDP-bound state, owing to GTPase activity of alpha-tubulin. This Naegleria pringsheimi (Amoeba) protein is Tubulin beta chain.